Reading from the N-terminus, the 187-residue chain is Elongation factor P (187 aa).

This sequence belongs to the elongation factor P family.

The protein localises to the cytoplasm. It functions in the pathway protein biosynthesis; polypeptide chain elongation. Involved in peptide bond synthesis. Stimulates efficient translation and peptide-bond synthesis on native or reconstituted 70S ribosomes in vitro. Probably functions indirectly by altering the affinity of the ribosome for aminoacyl-tRNA, thus increasing their reactivity as acceptors for peptidyl transferase. The chain is Elongation factor P from Mycoplasmopsis pulmonis (strain UAB CTIP) (Mycoplasma pulmonis).